The chain runs to 448 residues: MAAQVTDALKNLKVKDPNAVVESAAEAKANGNAQPEAEAEDSDDDDEEPVNGEGAGEGGAKKKRKRKKKPKKKAGANPKVQSSPPRVLLSNLFPSGEYPVGEEVEYRDENNYRTTSEEKRYLDRMNNDFLQEYRQGAEIHRQVRQYAKANIKPGQTLTEIAEGIEDSVRALTGHPGLEEGDNIKGGVAFPTGVNLDHIAAHYSPNAGNKTVLAYENVMKVDFGVHINGRIVDSAFTIAFDPMYDNLLEAVKQATNTGIKEAGIDARLGEIGEHIQETMESYEVEIKGQTYQVKPIRNLNGHDILQWKIHGGKSVPIVKSNDQTKMEEGEVFAIETFGSTGNGYVRDDLECSHYAKVADAPNVPLRIASAGKLLNVINKNFGTLPFCRRYLDRLGQDKYLLGLNALVSHGIVQDYPPLVDKKGSYTAQFEHTIVLRPNCKEVISRGDDY.

Residues 1 to 94 form a disordered region; it reads MAAQVTDALK…PRVLLSNLFP (94 aa). The segment covering 37–50 has biased composition (acidic residues); the sequence is AEAEDSDDDDEEPV. Residues 61 to 74 are compositionally biased toward basic residues; it reads KKKRKRKKKPKKKA. Histidine 201 is a substrate binding site. Aspartate 221, aspartate 232, and histidine 301 together coordinate a divalent metal cation. Position 309 (histidine 309) interacts with substrate. A divalent metal cation-binding residues include glutamate 334 and glutamate 429.

Belongs to the peptidase M24A family. Methionine aminopeptidase eukaryotic type 2 subfamily. Co(2+) serves as cofactor. Requires Zn(2+) as cofactor. Mn(2+) is required as a cofactor. It depends on Fe(2+) as a cofactor.

Its subcellular location is the cytoplasm. It catalyses the reaction Release of N-terminal amino acids, preferentially methionine, from peptides and arylamides.. Cotranslationally removes the N-terminal methionine from nascent proteins. The N-terminal methionine is often cleaved when the second residue in the primary sequence is small and uncharged (Met-Ala-, Cys, Gly, Pro, Ser, Thr, or Val). The polypeptide is Methionine aminopeptidase 2 (Botryotinia fuckeliana (strain B05.10) (Noble rot fungus)).